We begin with the raw amino-acid sequence, 344 residues long: N-acetyl-gamma-glutamyl-phosphate reductase (344 aa).

Residue Cys-150 is part of the active site.

This sequence belongs to the NAGSA dehydrogenase family. Type 1 subfamily.

Its subcellular location is the cytoplasm. The catalysed reaction is N-acetyl-L-glutamate 5-semialdehyde + phosphate + NADP(+) = N-acetyl-L-glutamyl 5-phosphate + NADPH + H(+). Its pathway is amino-acid biosynthesis; L-arginine biosynthesis; N(2)-acetyl-L-ornithine from L-glutamate: step 3/4. In terms of biological role, catalyzes the NADPH-dependent reduction of N-acetyl-5-glutamyl phosphate to yield N-acetyl-L-glutamate 5-semialdehyde. In Pseudomonas putida (strain W619), this protein is N-acetyl-gamma-glutamyl-phosphate reductase.